The chain runs to 421 residues: Gamma-glutamyl phosphate reductase (421 aa).

It belongs to the gamma-glutamyl phosphate reductase family.

It is found in the cytoplasm. The catalysed reaction is L-glutamate 5-semialdehyde + phosphate + NADP(+) = L-glutamyl 5-phosphate + NADPH + H(+). It participates in amino-acid biosynthesis; L-proline biosynthesis; L-glutamate 5-semialdehyde from L-glutamate: step 2/2. Functionally, catalyzes the NADPH-dependent reduction of L-glutamate 5-phosphate into L-glutamate 5-semialdehyde and phosphate. The product spontaneously undergoes cyclization to form 1-pyrroline-5-carboxylate. The sequence is that of Gamma-glutamyl phosphate reductase from Pseudomonas syringae pv. tomato (strain ATCC BAA-871 / DC3000).